The sequence spans 433 residues: Mitochondrial inner membrane protein OXA1L (433 aa).

At 1–108 (MARNLVCGRW…QCATEPSFTE (108 aa)) the chain is on the mitochondrial intermembrane side. The helical transmembrane segment at 109–129 (LGLGSYTPVGLIQNLLEYIHV) threads the bilayer. Residues 130–134 (DLGLP) are Mitochondrial matrix-facing. A helical transmembrane segment spans residues 135-155 (WWGAIATCTVLARCLVFPLIV). Topologically, residues 156 to 207 (KGQREAAKIHNHMPEMQKFSARIREAKLAGDQAEFYKATIEMTRYQKKHDIK) are mitochondrial intermembrane. The chain crosses the membrane as a helical span at residues 208–228 (LLRPLILPLTQAPVFISFFIA). Residues 229 to 255 (LREMANLPVPSLQTGGLWWFQDLTVSD) are Mitochondrial matrix-facing. Residues 256 to 276 (PIYVLPLVVTATMWCVLELGA) form a helical membrane-spanning segment. Residues 277-293 (ETGVQSNDLQFMRNIIR) are Mitochondrial intermembrane-facing. The chain crosses the membrane as a helical span at residues 294–314 (VMPLVVLPVTIHFPSAVFMYW). The Mitochondrial matrix portion of the chain corresponds to 315–433 (LSSNVFSLCQ…AKKPWQDTLG (119 aa)). Residue Ser-359 is modified to Phosphoserine. A phosphothreonine mark is found at Thr-395 and Thr-397. The tract at residues 397–433 (THNPLLQHDPSHPPKAPNSNNSSIKANAKKPWQDTLG) is disordered. Low complexity predominate over residues 413-426 (PNSNNSSIKANAKK).

It belongs to the OXA1/ALB3/YidC family. As to quaternary structure, monomer; predominantly monomeric at low salt concentrations. Homooligomer; predominantly homooligomeric at high salt concentrations. Associates with the mitochondrial ribosome. Associates preferentially as a dimer with the large ribosomal subunit 39S of the mitochondrial ribosome. Interacts with OXA1L; promoting cotranslational quality control in mitochondria.

The protein localises to the mitochondrion inner membrane. In terms of biological role, mitochondrial membrane insertase that mediates the cotranslational insertion of integral membrane proteins into the mitochondrial inner membrane. Essential for the activity and assembly of cytochrome oxidase. Required for the correct biogenesis of ATP synthase and complex I in mitochondria. The polypeptide is Mitochondrial inner membrane protein OXA1L (Oxa1l) (Mus musculus (Mouse)).